A 123-amino-acid chain; its full sequence is Small ribosomal subunit protein uS13c (123 aa).

The disordered stretch occupies residues 99 to 123; that stretch reads GQRTRSNARTRRGAKKTVAGKKLAK. Residues 100–123 show a composition bias toward basic residues; that stretch reads QRTRSNARTRRGAKKTVAGKKLAK.

Belongs to the universal ribosomal protein uS13 family. As to quaternary structure, part of the 30S ribosomal subunit.

Its subcellular location is the plastid. It is found in the chloroplast. Located at the top of the head of the 30S subunit, it contacts several helices of the 16S rRNA. This is Small ribosomal subunit protein uS13c from Cyanidioschyzon merolae (strain NIES-3377 / 10D) (Unicellular red alga).